A 336-amino-acid chain; its full sequence is 3-isopropylmalate dehydrogenase (336 aa).

Residues Arg87, Arg97, Arg121, and Asp211 each contribute to the substrate site. Residues Asp211, Asp235, and Asp239 each contribute to the Mg(2+) site. Residue 271-283 (GSAPDIAGQGIAD) coordinates NAD(+).

The protein belongs to the isocitrate and isopropylmalate dehydrogenases family. LeuB type 2 subfamily. Homodimer. Requires Mg(2+) as cofactor. It depends on Mn(2+) as a cofactor.

Its subcellular location is the cytoplasm. The catalysed reaction is (2R,3S)-3-isopropylmalate + NAD(+) = 4-methyl-2-oxopentanoate + CO2 + NADH. It participates in amino-acid biosynthesis; L-leucine biosynthesis; L-leucine from 3-methyl-2-oxobutanoate: step 3/4. Catalyzes the oxidation of 3-carboxy-2-hydroxy-4-methylpentanoate (3-isopropylmalate) to 3-carboxy-4-methyl-2-oxopentanoate. The product decarboxylates to 4-methyl-2 oxopentanoate. The protein is 3-isopropylmalate dehydrogenase of Mycobacterium leprae (strain Br4923).